A 676-amino-acid polypeptide reads, in one-letter code: Urocanate hydratase (676 aa).

NAD(+) contacts are provided by residues 126–127, glutamine 204, 251–253, glutamate 271, 317–318, 343–347, 354–355, and tyrosine 403; these read GG, GMS, NV, QTSCH, and YY. An N6-succinyllysine modification is found at lysine 534. Position 594 (glycine 594) interacts with NAD(+).

The protein belongs to the urocanase family. It depends on NAD(+) as a cofactor.

The enzyme catalyses 4-imidazolone-5-propanoate = trans-urocanate + H2O. Its pathway is amino-acid degradation; L-histidine degradation into L-glutamate; N-formimidoyl-L-glutamate from L-histidine: step 2/3. The polypeptide is Urocanate hydratase (Uroc1) (Mus musculus (Mouse)).